We begin with the raw amino-acid sequence, 168 residues long: ATP synthase F(1) complex subunit delta, mitochondrial (168 aa).

Residues 1-22 (MLPAALLRRPGLGRLVRHARAY) constitute a mitochondrion transit peptide. Residues lysine 136 and lysine 165 each carry the N6-acetyllysine; alternate modification. 2 positions are modified to N6-succinyllysine; alternate: lysine 136 and lysine 165.

The protein belongs to the ATPase epsilon chain family. As to quaternary structure, component of the ATP synthase complex composed at least of ATP5F1A/subunit alpha, ATP5F1B/subunit beta, ATP5MC1/subunit c (homooctomer), MT-ATP6/subunit a, MT-ATP8/subunit 8, ATP5ME/subunit e, ATP5MF/subunit f, ATP5MG/subunit g, ATP5MK/subunit k, ATP5MJ/subunit j, ATP5F1C/subunit gamma, ATP5F1D/subunit delta, ATP5F1E/subunit epsilon, ATP5PF/subunit F6, ATP5PB/subunit b, ATP5PD/subunit d, ATP5PO/subunit OSCP. ATP synthase complex consists of a soluble F(1) head domain (subunits alpha(3) and beta(3)) - the catalytic core - and a membrane F(0) domain - the membrane proton channel (subunits c, a, 8, e, f, g, k and j). These two domains are linked by a central stalk (subunits gamma, delta, and epsilon) rotating inside the F1 region and a stationary peripheral stalk (subunits F6, b, d, and OSCP). Component of a complex composed at least by ATPIF1, ATP5F1A, ATP5F1B, ATP5F1C AND ATP5F1E.

It localises to the mitochondrion. Its subcellular location is the mitochondrion inner membrane. Functionally, subunit delta, of the mitochondrial membrane ATP synthase complex (F(1)F(0) ATP synthase or Complex V) that produces ATP from ADP in the presence of a proton gradient across the membrane which is generated by electron transport complexes of the respiratory chain. ATP synthase complex consist of a soluble F(1) head domain - the catalytic core - and a membrane F(1) domain - the membrane proton channel. These two domains are linked by a central stalk rotating inside the F(1) region and a stationary peripheral stalk. During catalysis, ATP synthesis in the catalytic domain of F(1) is coupled via a rotary mechanism of the central stalk subunits to proton translocation. In vivo, can only synthesize ATP although its ATP hydrolase activity can be activated artificially in vitro. With the central stalk subunit gamma, is essential for the biogenesis of F(1) catalytic part of the ATP synthase complex namely in the formation of F1 assembly intermediate. The polypeptide is ATP synthase F(1) complex subunit delta, mitochondrial (Homo sapiens (Human)).